A 171-amino-acid chain; its full sequence is S-ribosylhomocysteine lyase (171 aa).

Fe cation is bound by residues His-54, His-58, and Cys-128.

Belongs to the LuxS family. As to quaternary structure, homodimer. It depends on Fe cation as a cofactor.

It carries out the reaction S-(5-deoxy-D-ribos-5-yl)-L-homocysteine = (S)-4,5-dihydroxypentane-2,3-dione + L-homocysteine. Its function is as follows. Involved in the synthesis of autoinducer 2 (AI-2) which is secreted by bacteria and is used to communicate both the cell density and the metabolic potential of the environment. The regulation of gene expression in response to changes in cell density is called quorum sensing. Catalyzes the transformation of S-ribosylhomocysteine (RHC) to homocysteine (HC) and 4,5-dihydroxy-2,3-pentadione (DPD). The sequence is that of S-ribosylhomocysteine lyase from Salmonella typhi.